The chain runs to 431 residues: Homogentisate 1,2-dioxygenase (431 aa).

Histidine 286 functions as the Proton acceptor in the catalytic mechanism. Residues histidine 329 and glutamate 335 each contribute to the Fe cation site. Homogentisate is bound by residues tyrosine 344 and histidine 365. Histidine 365 provides a ligand contact to Fe cation.

This sequence belongs to the homogentisate dioxygenase family. Hexamer; dimer of trimers. Fe cation is required as a cofactor.

It carries out the reaction homogentisate + O2 = 4-maleylacetoacetate + H(+). The protein operates within amino-acid degradation; L-phenylalanine degradation; acetoacetate and fumarate from L-phenylalanine: step 4/6. Functionally, involved in the catabolism of homogentisate (2,5-dihydroxyphenylacetate or 2,5-OH-PhAc), a central intermediate in the degradation of phenylalanine and tyrosine. Catalyzes the oxidative ring cleavage of the aromatic ring of homogentisate to yield maleylacetoacetate. The sequence is that of Homogentisate 1,2-dioxygenase from Pseudomonas fluorescens (strain Pf0-1).